A 236-amino-acid chain; its full sequence is SPbeta prophage-derived uncharacterized lipoprotein YokB (236 aa).

The first 19 residues, 1 to 19 (MNIRFSMLVCVSFIFFTGG), serve as a signal peptide directing secretion. Cysteine 20 is lipidated: N-palmitoyl cysteine. Cysteine 20 carries S-diacylglycerol cysteine lipidation. 2 disordered regions span residues 23–59 (SSAN…TPNM) and 204–236 (VKKV…KDNK). Residues 31-53 (SKNKNESKEESSEEGVKENDNKL) are compositionally biased toward basic and acidic residues.

The protein resides in the cell membrane. This Bacillus subtilis (strain 168) protein is SPbeta prophage-derived uncharacterized lipoprotein YokB (yokB).